The chain runs to 86 residues: Maxadilan (86 aa).

The first 23 residues, M1–G23, serve as a signal peptide directing secretion. Cystine bridges form between C24–C28 and C37–C74.

Interacts with human ADCYAP1R1. As to expression, salivary gland (at protein level).

It localises to the secreted. Functionally, potent vasodilator. Activates mammalian ADCYAP1R1, a PAC1 receptor, and induces cAMP accumulation in host cells. Causes the development of erythema following superficial injection into the rabbit or human skin. Influences adaptive immune responses mediated by host dendritic cells. Reduces surface expression of CD80 on host dendritic cells stimulated with lipopolysaccharides (LPS) and induces concomitant increase in CD86 expression on a subpopulation of these cells. Redirects cytokine secretion by LPS-activated host dendritic cells toward type 2 responses: decreases secretion of TNF-alpha/TNF, IL-12p40/IL12B and IFN-gamma/IFNG, and increases secretion of IL6 and IL10. Reduces ability of host bone marrow-derived dendritic cells to stimulate proliferation of CD4(+) T-cells. Reprograms the effect of LPS-activated host dendritic cells on cytokine secretion profiles in host T-cells: decreases secretion of TNF-alpha/TNF and IFN-gamma/IFNG, increases secretion of IL6 and IL13, and increases secretion of pro-inflammatory cytokine IL-1beta/IL1B in mixed lymphocyte reaction (MLR) cultures. Reduces LPS-induced up-regulation of CCR7 in activated host dendritic cells. Inhibits IFN-gamma/IFNG and IL-12p40/IL12B production by human peripheral blood mononuclear cells. Increases IL6 and decreases TNF-alpha/TNF production by LPS-stimulated human monocytes. Its function is as follows. (Microbial infection) Probably plays a critical role in the enhancement of Leishmania infectivity in the host attributed to sand fly saliva. This Lutzomyia longipalpis (Sand fly) protein is Maxadilan.